A 508-amino-acid polypeptide reads, in one-letter code: Kinesin light chain (508 aa).

A coiled-coil region spans residues 34-129 (IAEVQKDNEK…KKHLEFMASV (96 aa)). Positions 156-175 (DEENEDRHNMSPTPPSQFAN) are disordered. A Phosphothreonine modification is found at Thr-168. TPR repeat units lie at residues 186–219 (LRTL…LERT), 228–261 (ATML…RGKT), 270–303 (AATL…REKV), 312–345 (AKQL…YESK), 354–387 (AKTK…AHER), and 437–470 (TTTL…KKEA). Position 477 is a phosphothreonine (Thr-477). Phosphoserine is present on residues Ser-480 and Ser-485. Residues 484–508 (TSNEKRRSKAIKEDLDFSEEKNAKP) are disordered. The segment covering 493-508 (AIKEDLDFSEEKNAKP) has biased composition (basic and acidic residues).

It belongs to the kinesin light chain family. As to quaternary structure, oligomeric complex composed of two heavy chains and two light chains. Ubiquitous.

The protein resides in the cytoplasm. It localises to the cytoskeleton. Functionally, kinesin is a microtubule-associated force-producing protein that may play a role in organelle transport. The light chain may function in coupling of cargo to the heavy chain or in the modulation of its ATPase activity. This chain is Kinesin light chain (Klc), found in Drosophila melanogaster (Fruit fly).